The following is a 475-amino-acid chain: Flotillin-like protein 4 (475 aa).

2 coiled-coil regions span residues 235 to 255 (ENQREAEVAEANSELAKKKAA) and 305 to 325 (QYETKVQEANWELYKKQKEAE).

This sequence belongs to the band 7/mec-2 family. Flotillin subfamily. Expressed in roots and nodules. Primarily expressed in vascular tissues. Upon induction of nodulation, expansion of expression in the root cortex in the region of elongating root hairs, which will eventually become colonized by bacteria. Expressed in the infection zone in nodules.

It is found in the membrane. It localises to the caveola. The protein resides in the cell membrane. Functionally, may act as a scaffolding protein within caveolar membranes, functionally participating in formation of caveolae or caveolae-like vesicles. Required for normal infection threads initiation and elongation and nodulation. Probably involved in polar growth of the infection thread. In Medicago truncatula (Barrel medic), this protein is Flotillin-like protein 4 (FLOT4).